The chain runs to 1755 residues: Transposon Ty1-ER2 Gag-Pol polyprotein (1755 aa).

3 stretches are compositionally biased toward polar residues: residues 1 to 10 (MESQQLSNYP), 48 to 60 (TKAN…TPAS), and 127 to 152 (QSQF…GNTF). 3 disordered regions span residues 1–93 (MESQ…MMTQ), 126–173 (PQSQ…RPPP), and 352–421 (GSRN…SKST). Positions 153–165 (TDSSSADSDMTST) are enriched in low complexity. The tract at residues 299–401 (NNGIHINNKV…NSKSKTARAH (103 aa)) is RNA-binding. Residues 402–418 (NVSTSNNSPSTDNDSIS) show a composition bias toward low complexity. The For protease activity; shared with dimeric partner role is filled by aspartate 461. The integrase-type zinc finger-like stretch occupies residues 583–640 (NVHTSESTRKYPYPFIHRMLAHANAQTIRYSLKNNTITYFNESDVDWSSAIDYQCPDC). The Integrase catalytic domain maps to 660–835 (NSYEPFQYLH…AGLDISTLLP (176 aa)). Residues aspartate 671 and aspartate 736 each contribute to the Mg(2+) site. A disordered region spans residues 958-1170 (AVSPTDSTPP…SSLGGIGDSN (213 aa)). Low complexity predominate over residues 960-969 (SPTDSTPPST). A compositionally biased stretch (polar residues) spans 1005–1015 (STPQISDIEST). A compositionally biased stretch (basic and acidic residues) spans 1038 to 1053 (ESSHASKSKDFRHSDS). Polar residues-rich tracts occupy residues 1054–1082 (YSDN…QTSE) and 1095–1106 (SIDTSSSESNSL). The short motif at 1178–1212 (KKRSLEDNETEIKVSRDTWNTKNMRSLEPPRSKKR) is the Bipartite nuclear localization signal element. One can recognise a Reverse transcriptase Ty1/copia-type domain in the interval 1338 to 1476 (NNYYITQLDI…DILGLEIKYQ (139 aa)). The Mg(2+) site is built by aspartate 1346, aspartate 1427, aspartate 1428, aspartate 1610, glutamate 1652, and aspartate 1685. Positions 1610–1752 (DASYGNQPYY…IKTFKLLTNK (143 aa)) constitute an RNase H Ty1/copia-type domain.

In terms of assembly, the capsid protein forms a homotrimer, from which the VLPs are assembled. The protease is a homodimer, whose active site consists of two apposed aspartic acid residues. Post-translationally, initially, virus-like particles (VLPs) are composed of the structural unprocessed proteins Gag and Gag-Pol, and also contain the host initiator methionine tRNA (tRNA(i)-Met) which serves as a primer for minus-strand DNA synthesis, and a dimer of genomic Ty RNA. Processing of the polyproteins occurs within the particle and proceeds by an ordered pathway, called maturation. First, the protease (PR) is released by autocatalytic cleavage of the Gag-Pol polyprotein yielding capsid protein p45 and a Pol-p154 precursor protein. This cleavage is a prerequisite for subsequent processing of Pol-p154 at the remaining sites to release the mature structural and catalytic proteins. Maturation takes place prior to the RT reaction and is required to produce transposition-competent VLPs.

Its subcellular location is the cytoplasm. The protein resides in the nucleus. It carries out the reaction DNA(n) + a 2'-deoxyribonucleoside 5'-triphosphate = DNA(n+1) + diphosphate. The enzyme catalyses Endonucleolytic cleavage to 5'-phosphomonoester.. Functionally, capsid protein (CA) is the structural component of the virus-like particle (VLP), forming the shell that encapsulates the retrotransposons dimeric RNA genome. The particles are assembled from trimer-clustered units and there are holes in the capsid shells that allow for the diffusion of macromolecules. CA also has nucleocapsid-like chaperone activity, promoting primer tRNA(i)-Met annealing to the multipartite primer-binding site (PBS), dimerization of Ty1 RNA and initiation of reverse transcription. Its function is as follows. The aspartyl protease (PR) mediates the proteolytic cleavages of the Gag and Gag-Pol polyproteins after assembly of the VLP. In terms of biological role, reverse transcriptase/ribonuclease H (RT) is a multifunctional enzyme that catalyzes the conversion of the retro-elements RNA genome into dsDNA within the VLP. The enzyme displays a DNA polymerase activity that can copy either DNA or RNA templates, and a ribonuclease H (RNase H) activity that cleaves the RNA strand of RNA-DNA heteroduplexes during plus-strand synthesis and hydrolyzes RNA primers. The conversion leads to a linear dsDNA copy of the retrotransposon that includes long terminal repeats (LTRs) at both ends. Integrase (IN) targets the VLP to the nucleus, where a subparticle preintegration complex (PIC) containing at least integrase and the newly synthesized dsDNA copy of the retrotransposon must transit the nuclear membrane. Once in the nucleus, integrase performs the integration of the dsDNA into the host genome. The chain is Transposon Ty1-ER2 Gag-Pol polyprotein (TY1B-ER2) from Saccharomyces cerevisiae (strain ATCC 204508 / S288c) (Baker's yeast).